Here is a 66-residue protein sequence, read N- to C-terminus: Large ribosomal subunit protein uL29 (66 aa).

It belongs to the universal ribosomal protein uL29 family.

This chain is Large ribosomal subunit protein uL29, found in Rhizobium meliloti (strain 1021) (Ensifer meliloti).